Here is a 284-residue protein sequence, read N- to C-terminus: Nucleotide-binding protein NGK_0463 (284 aa).

Position 8–15 (G8–S15) interacts with ATP. D58–S61 is a GTP binding site.

This sequence belongs to the RapZ-like family.

Its function is as follows. Displays ATPase and GTPase activities. The sequence is that of Nucleotide-binding protein NGK_0463 from Neisseria gonorrhoeae (strain NCCP11945).